Consider the following 370-residue polypeptide: Dual-specificity RNA methyltransferase RlmN (370 aa).

The active-site Proton acceptor is the E93. In terms of domain architecture, Radical SAM core spans 99-337 (EEGRGTLCVS…VTTVRKTRGD (239 aa)). C106 and C343 are disulfide-bonded. [4Fe-4S] cluster contacts are provided by C113, C117, and C120. Residues 167 to 168 (GE), S199, 221 to 223 (SLH), and N300 contribute to the S-adenosyl-L-methionine site. C343 acts as the S-methylcysteine intermediate in catalysis.

Belongs to the radical SAM superfamily. RlmN family. The cofactor is [4Fe-4S] cluster.

The protein resides in the cytoplasm. The enzyme catalyses adenosine(2503) in 23S rRNA + 2 reduced [2Fe-2S]-[ferredoxin] + 2 S-adenosyl-L-methionine = 2-methyladenosine(2503) in 23S rRNA + 5'-deoxyadenosine + L-methionine + 2 oxidized [2Fe-2S]-[ferredoxin] + S-adenosyl-L-homocysteine. The catalysed reaction is adenosine(37) in tRNA + 2 reduced [2Fe-2S]-[ferredoxin] + 2 S-adenosyl-L-methionine = 2-methyladenosine(37) in tRNA + 5'-deoxyadenosine + L-methionine + 2 oxidized [2Fe-2S]-[ferredoxin] + S-adenosyl-L-homocysteine. Functionally, specifically methylates position 2 of adenine 2503 in 23S rRNA and position 2 of adenine 37 in tRNAs. m2A2503 modification seems to play a crucial role in the proofreading step occurring at the peptidyl transferase center and thus would serve to optimize ribosomal fidelity. This Francisella tularensis subsp. holarctica (strain FTNF002-00 / FTA) protein is Dual-specificity RNA methyltransferase RlmN.